The following is a 355-amino-acid chain: MASNPEEKSNDRQKALDNAISQIEKAFGKGAIMKLKQNPVEKIDTISTGSIALDSALGVGGLPKGRIVEIFGPESSGKTTLALHVIAEAQKKGGLCAFIDAEHALDVMYARKLGVNTDNLVISQPDTGEQALHIVEYLVCSSAVDVIVVDSVAALTPRAEIEGDMGDQHVGLQARLLSHGLRKLTSAVSKANCILIFINQIRMKIGVVYGNPETTTGGNALKFYTSVRLDIRKVGAIKDKESIKGNETRVKVVKNKVAPPFREAKFDIMYNEGVSKLGEIIDIGAKLGVLEKAGAYYSYNNTRLGQGRENVKNYFKANKEVANEVEAKIRDLLGNSDNSITMEEESRQLLEEAVF.

72 to 79 (GPESSGKT) contacts ATP.

This sequence belongs to the RecA family.

Its subcellular location is the cytoplasm. Can catalyze the hydrolysis of ATP in the presence of single-stranded DNA, the ATP-dependent uptake of single-stranded DNA by duplex DNA, and the ATP-dependent hybridization of homologous single-stranded DNAs. It interacts with LexA causing its activation and leading to its autocatalytic cleavage. The sequence is that of Protein RecA from Wolbachia sp. subsp. Brugia malayi (strain TRS).